Here is an 83-residue protein sequence, read N- to C-terminus: MSGRTGERPFGDIVTSIRYWIIHTITVPMLFLAGWLFVSTGLAYDVFGTPRPNEYFDQARQGLPLVTDRYEGKQQIDEFTKGL.

The chain crosses the membrane as a helical span at residues I21–W35. A heme-binding site is contributed by H23.

Belongs to the PsbE/PsbF family. As to quaternary structure, heterodimer of an alpha subunit and a beta subunit. PSII is composed of 1 copy each of membrane proteins PsbA, PsbB, PsbC, PsbD, PsbE, PsbF, PsbH, PsbI, PsbJ, PsbK, PsbL, PsbM, PsbT, PsbX, PsbY, PsbZ, Psb30/Ycf12, peripheral proteins PsbO, CyanoQ (PsbQ), PsbU, PsbV and a large number of cofactors. It forms dimeric complexes. Heme b serves as cofactor.

It localises to the cellular thylakoid membrane. Its function is as follows. This b-type cytochrome is tightly associated with the reaction center of photosystem II (PSII). PSII is a light-driven water:plastoquinone oxidoreductase that uses light energy to abstract electrons from H(2)O, generating O(2) and a proton gradient subsequently used for ATP formation. It consists of a core antenna complex that captures photons, and an electron transfer chain that converts photonic excitation into a charge separation. This chain is Cytochrome b559 subunit alpha, found in Acaryochloris marina (strain MBIC 11017).